The following is a 26-amino-acid chain: Metallothionein (26 aa).

The span at 1–14 (MGDCGCSGASSCNC) shows a compositional bias: low complexity. The interval 1–26 (MGDCGCSGASSCNCGSGCSCSNCGSK) is disordered. Positions 4, 6, 12, 14, 18, 20, and 23 each coordinate Cu(+). Cys residues predominate over residues 15 to 26 (GSGCSCSNCGSK).

It belongs to the metallothionein superfamily. Type 8 family.

This Neurospora crassa (strain ATCC 24698 / 74-OR23-1A / CBS 708.71 / DSM 1257 / FGSC 987) protein is Metallothionein (cmt).